The following is a 584-amino-acid chain: Chondroitin proteoglycan 1 (584 aa).

A signal peptide spans 1-17 (MTLKPVLLAFLVASAYA). Ser-50 carries O-linked (Xyl...) (chondroitin sulfate) serine glycosylation. Chitin-binding type-2 domains follow at residues 58–115 (DTDC…QCGG), 211–268 (TKSC…ECTN), and 524–578 (VPAC…ECHQ). 2 disulfide bridges follow: Cys-91/Cys-104 and Cys-244/Cys-257. A disordered region spans residues 267–295 (TNGSGNDEGSADETTPESSGEMPYSNGYG). Asn-268 carries an N-linked (GlcNAc...) asparagine glycan. A disulfide bond links Cys-554 and Cys-567.

As to expression, expressed in the germline.

Required for polar body extrusion during cytokinesis in embryo development. Affects cortical granule size. Has roles in meiotic chromosome segregation, osmotic barrier function and polarization in conjunction with cpg-2. Binds chitin. The sequence is that of Chondroitin proteoglycan 1 (cpg-1) from Caenorhabditis elegans.